We begin with the raw amino-acid sequence, 962 residues long: Nonribosomal peptide synthetase atqA (962 aa).

The adenylation (A) domain stretch occupies residues Ala-34–Ile-462. Residues Ser-595–Ser-672 enclose the Carrier domain. Ser-630 bears the O-(pantetheine 4'-phosphoryl)serine mark. The thioesterase (TE) domain stretch occupies residues Pro-694 to Lys-951.

This sequence belongs to the NRP synthetase family.

Its pathway is secondary metabolite biosynthesis. Its function is as follows. Nonribosomal peptide synthetase; part of the gene cluster that mediates the biosynthesis of asterriquinone CT5, a natural product that displays potential biological activities including antitumor and insulin mimic activities. The nonribosomal peptide synthetase atqA is responsible for the production of the benzoquinone derivative didemethylasterriquinone D (DDAQ D), via condensation of 2 indole pyruvic acid (IPA) molecules. The symmetric connectivity of the 2 IPA molecules is thought to arise by head-to-tail dual Claisen condensations catalyzed by the TE domain of atqA. DDAQ D represents the core structure of asterriquinones and is further modified by yet unidentified tailoring enzymes to lead to the production of asterriquinone CT5. In Aspergillus terreus (strain NIH 2624 / FGSC A1156), this protein is Nonribosomal peptide synthetase atqA.